The chain runs to 195 residues: dITP/XTP pyrophosphatase (195 aa).

7 to 12 (SSNKGK) serves as a coordination point for substrate. 2 residues coordinate Mg(2+): Glu-38 and Asp-68. Asp-68 functions as the Proton acceptor in the catalytic mechanism. Residues Ser-69, 150–153 (FGYD), Lys-173, and 178–179 (HR) each bind substrate.

It belongs to the HAM1 NTPase family. In terms of assembly, homodimer. The cofactor is Mg(2+).

It catalyses the reaction XTP + H2O = XMP + diphosphate + H(+). It carries out the reaction dITP + H2O = dIMP + diphosphate + H(+). The catalysed reaction is ITP + H2O = IMP + diphosphate + H(+). In terms of biological role, pyrophosphatase that catalyzes the hydrolysis of nucleoside triphosphates to their monophosphate derivatives, with a high preference for the non-canonical purine nucleotides XTP (xanthosine triphosphate), dITP (deoxyinosine triphosphate) and ITP. Seems to function as a house-cleaning enzyme that removes non-canonical purine nucleotides from the nucleotide pool, thus preventing their incorporation into DNA/RNA and avoiding chromosomal lesions. The chain is dITP/XTP pyrophosphatase from Nautilia profundicola (strain ATCC BAA-1463 / DSM 18972 / AmH).